Reading from the N-terminus, the 157-residue chain is uncharacterized protein (157 aa).

The N-terminal stretch at 1 to 28 (MKRLFMKASLVLFAVVFVFAVKGAPAKA) is a signal peptide.

This is an uncharacterized protein from Bacillus subtilis (strain 168).